Here is a 628-residue protein sequence, read N- to C-terminus: MAEARLLRRRRLCLAVPFVWVVAVAVSRVGANTEGDALYSLRQSLKDANNVLQSWDPTLVNPCTWFHVTCNPDNSVIRVDLGNAQLSGALVPQLGQLKNLQYLELYSNNISGTIPNELGNLTNLVSLDLYLNNFTGFIPETLGQLYKLRFLRLNNNSLSGSIPKSLTNITTLQVLDLSNNNLSGEVPSTGSFSLFTPISFANNKDLCGPGTTKPCPGAPPFSPPPPFNPPTPTVSQGDSKTGAIAGGVAAAAALLFAVPAIGFAWWRRRKPEEHFFDVPAEEDPEVHLGQLKRFSLRELQVATDNFSNKNILGRGGFGKVYKGRLADGSLVAVKRLKEERTPGGELQFQTEVEMISMAVHRNLLRLRGFCMTPTERLLVYPYMANGSVASRLRERQPNDPPLEWQTRTRIALGSARGLSYLHDHCDPKIIHRDVKAANILLDEDFEAVVGDFGLAKLMDYKDTHVTTAVRGTIGHIAPEYLSTGKSSEKTDVFGYGIMLLELITGQRAFDLARLANDDDVMLLDWVKGLLKEKKVEMLVDPDLQSGFVEHEVESLIQVALLCTQGSPMDRPKMSEVVRMLEGDGLAERWEEWQKVEVVRQEAELAPRHNDWIVDSTYNLRAMELSGPR.

The N-terminal stretch at methionine 1–alanine 31 is a signal peptide. 4 LRR repeats span residues leucine 97 to leucine 121, asparagine 123 to glutamine 144, leucine 145 to isoleucine 169, and threonine 170 to leucine 194. Asparagine 109, asparagine 120, asparagine 133, asparagine 155, asparagine 168, and asparagine 181 each carry an N-linked (GlcNAc...) asparagine glycan. Residues alanine 243–phenylalanine 263 traverse the membrane as a helical segment. Phosphothreonine is present on threonine 303. Residues phenylalanine 306–glutamine 593 enclose the Protein kinase domain. Residue leucine 312 to valine 320 participates in ATP binding. Phosphoserine is present on serine 329. Lysine 334 contacts ATP. Position 350 is a phosphothreonine (threonine 350). Residues serine 356 and serine 387 each carry the phosphoserine modification. Residue aspartate 433 is the Proton acceptor of the active site. Phosphothreonine occurs at positions 463, 466, and 472. Serine 615 carries the phosphoserine modification. A Phosphothreonine modification is found at threonine 616. Serine 625 carries the post-translational modification Phosphoserine.

It belongs to the protein kinase superfamily. Ser/Thr protein kinase family. As to quaternary structure, interacts with BRI1. Interacts with XA21, XA26/XA3 and FLS2. In terms of processing, autophosphorylated on serine and threonine residues. Expressed in flag leaves. Expressed in roots, shoot apex, leaf blades, leaf sheaths, panicles and flowers. Expressed leaves, stems, sheaths and flowers.

Its subcellular location is the cell membrane. The enzyme catalyses L-seryl-[protein] + ATP = O-phospho-L-seryl-[protein] + ADP + H(+). It carries out the reaction L-threonyl-[protein] + ATP = O-phospho-L-threonyl-[protein] + ADP + H(+). LRR receptor kinase involved in positive regulation of somatic embryogenesis and defense response against the rice blast fungus pathogen Magnaporthe oryzae. Involved in the positive regulation of receptor kinase-mediated immunity. Required for immunity mediated by the LRR receptor kinases XA21 and XA26/XA3 which recognize effectors from the bacterial pathogen Xanthomonas oryzae pv. oryzae (Xoo). Required for the immune response mediated by the LRR receptor kinase FLS2 which recognizes specifically the bacterial flagellin (flg22) effector. Kinase activity and direct interaction with the immune receptors is critical for their function. Involved in the regulation of plant growth through the brassinosteroid (BR) signaling pathway. The protein is LRR receptor kinase SERK2 of Oryza sativa subsp. japonica (Rice).